The sequence spans 512 residues: Bifunctional purine biosynthesis protein PurH (512 aa).

In terms of domain architecture, MGS-like spans 1–144; the sequence is MKRALVSVSD…KNYHDVTIVV (144 aa).

This sequence belongs to the PurH family.

It carries out the reaction (6R)-10-formyltetrahydrofolate + 5-amino-1-(5-phospho-beta-D-ribosyl)imidazole-4-carboxamide = 5-formamido-1-(5-phospho-D-ribosyl)imidazole-4-carboxamide + (6S)-5,6,7,8-tetrahydrofolate. The catalysed reaction is IMP + H2O = 5-formamido-1-(5-phospho-D-ribosyl)imidazole-4-carboxamide. It participates in purine metabolism; IMP biosynthesis via de novo pathway; 5-formamido-1-(5-phospho-D-ribosyl)imidazole-4-carboxamide from 5-amino-1-(5-phospho-D-ribosyl)imidazole-4-carboxamide (10-formyl THF route): step 1/1. It functions in the pathway purine metabolism; IMP biosynthesis via de novo pathway; IMP from 5-formamido-1-(5-phospho-D-ribosyl)imidazole-4-carboxamide: step 1/1. The polypeptide is Bifunctional purine biosynthesis protein PurH (Limosilactobacillus reuteri (strain DSM 20016) (Lactobacillus reuteri)).